The sequence spans 409 residues: Inactive serine protease 35 (409 aa).

A signal peptide spans M1–G17. Residues N87 and N107 are each glycosylated (N-linked (GlcNAc...) asparagine). Positions V120–A404 constitute a Peptidase S1 domain. A disulfide bridge links C150 with C166. Over residues R188–R203 the composition is skewed to basic residues. The disordered stretch occupies residues R188–R246. The segment covering R204 to K224 has biased composition (basic and acidic residues).

It belongs to the peptidase S1 family.

Its subcellular location is the secreted. This is Inactive serine protease 35 (PRSS35) from Macaca mulatta (Rhesus macaque).